The chain runs to 405 residues: Replication factor C large subunit (405 aa).

47-54 (GPPGVGKT) contributes to the ATP binding site.

This sequence belongs to the activator 1 small subunits family. RfcL subfamily. In terms of assembly, heteromultimer composed of small subunits (RfcS) and large subunits (RfcL).

Functionally, part of the RFC clamp loader complex which loads the PCNA sliding clamp onto DNA. This is Replication factor C large subunit from Saccharolobus islandicus (strain M.16.27) (Sulfolobus islandicus).